The chain runs to 341 residues: Cyclin-Y (341 aa).

The N-myristoyl glycine moiety is linked to residue glycine 2. Phosphoserine is present on residues serine 21 and serine 25. At threonine 30 the chain carries Phosphothreonine. Phosphoserine is present on serine 33. Residue threonine 37 is modified to Phosphothreonine. At threonine 67 the chain carries Phosphothreonine; by CDK14. Phosphoserine; by CDK14 occurs at positions 71 and 73. Residue threonine 75 is modified to Phosphothreonine. Phosphoserine; by CDK14 is present on serine 83. 3 positions are modified to phosphoserine: serine 99, serine 100, and serine 102. The Cyclin N-terminal domain occupies 143-265 (DIFDENLHPL…FLELLQFNIN (123 aa)). Residue serine 280 is modified to Phosphoserine. Phosphoserine; by CDK14 occurs at positions 288 and 295. Phosphoserine occurs at positions 324 and 326. Threonine 331 is subject to Phosphothreonine.

The protein belongs to the cyclin family. Cyclin Y subfamily. As to quaternary structure, found in a complex with CAPRIN2, LRP6 and CDK14 during G2/M stage; CAPRIN2 functions as a scaffold for the complex by binding to CCNY via its N terminus and to CDK14 via its C terminus. Interacts with CDK14. Interacts with CDK16. Interacts with LRP6. In terms of processing, ubiquitinated; leading to its degradation. Post-translationally, heavily phosphorylated. Phosphorylation at Ser-71 and Ser-73 by CDK14 is enhanced during the G2 and M cell cycle phases, and creates a phosphodegron triggering SCF-dependent ubiquitination. In terms of tissue distribution, widely expressed.

The protein resides in the cell membrane. Its subcellular location is the nucleus. In terms of biological role, positive regulatory subunit of the cyclin-dependent kinases CDK14/PFTK1 and CDK16. Acts as a cell-cycle regulator of Wnt signaling pathway during G2/M phase by recruiting CDK14/PFTK1 to the plasma membrane and promoting phosphorylation of LRP6, leading to the activation of the Wnt signaling pathway. Recruits CDK16 to the plasma membrane. Isoform 3 might play a role in the activation of MYC-mediated transcription. In Homo sapiens (Human), this protein is Cyclin-Y (CCNY).